The primary structure comprises 158 residues: Transcription elongation factor GreA (158 aa).

A coiled-coil region spans residues asparagine 48–alanine 75.

The protein belongs to the GreA/GreB family.

Functionally, necessary for efficient RNA polymerase transcription elongation past template-encoded arresting sites. The arresting sites in DNA have the property of trapping a certain fraction of elongating RNA polymerases that pass through, resulting in locked ternary complexes. Cleavage of the nascent transcript by cleavage factors such as GreA or GreB allows the resumption of elongation from the new 3'terminus. GreA releases sequences of 2 to 3 nucleotides. The chain is Transcription elongation factor GreA from Shouchella clausii (strain KSM-K16) (Alkalihalobacillus clausii).